We begin with the raw amino-acid sequence, 147 residues long: Ponticulin-like protein C1 (147 aa).

The N-terminal stretch at 1–20 is a signal peptide; sequence MKFTKSLLLLIVAVFASSNA. The GPI-like-anchor amidated asparagine moiety is linked to residue asparagine 118. Asparagine 118 is a glycosylation site (N-linked (GlcNAc...) asparagine). The propeptide at 119–147 is removed in mature form; the sequence is SSESDSSDSTRIGASFALAASVLLSMLAI.

This sequence belongs to the ponticulin family. The GPI-like-anchor contains a phosphoceramide group, rather than a phosphatidyl group.

It localises to the cell membrane. The chain is Ponticulin-like protein C1 (ponC1) from Dictyostelium discoideum (Social amoeba).